Reading from the N-terminus, the 390-residue chain is LIM/homeobox protein Lhx4 (390 aa).

2 consecutive LIM zinc-binding domains span residues 28–87 and 88–150; these read PQCA…RFGT and KCTA…AKQN. Positions 157-216 form a DNA-binding region, homeobox; that stretch reads AKRPRTTITAKQLETLKNAYKNSPKPARHVREQLSSETGLDMRVVQVWFQNRRAKEKRLK. An interaction with DNA region spans residues 161–181; that stretch reads RTTITAKQLETLKNAYKNSPK. Residues 199–211 are interaction with 5-mCpG DNA; it reads RVVQVWFQNRRAK. Disordered stretches follow at residues 231 to 253 and 355 to 390; these read VKRSRGGSKQEKESSAEDCGVSD and MAGGPTSDLSTGSSVGYPDFPTSPASWLDEMDHPPF.

Transient expression in ventrolateral regions of the developing neural tube and hindbrain.

The protein resides in the nucleus. Its function is as follows. May play a critical role in the development of respiratory control mechanisms and in the normal growth and maturation of the lung. Binds preferentially to methylated DNA. The chain is LIM/homeobox protein Lhx4 (Lhx4) from Mus musculus (Mouse).